Here is a 400-residue protein sequence, read N- to C-terminus: MDKSLFEQARPILEQIQDNGFEAYYVGGSVRDYVMGRNIHDIDITTSATPDEIESIFSHTIPVGKEHGTINVVFNDENYEVTTFRAEEDYVDHRRPSGVTFVRDLYEDLQRRDFTMNAIAMDTANKLYDYFDGQQDINNRIIRTVGIAEERFQEDALRMIRCLRFQSQLSFDIATETFEAMRTQMADIKFLSIERIVIELTKLMRGINVEKSFNHLKSLKAFNYMPYFEHLDMNQINVTEPIDLELLIAIVSVKFDINYSLKPLKLSNRQVKDINQYIQIMNALPSIITKEQLKMFVYDYDTNLIKNVMVAADVLKANDIQGHEPLIVNLQTIDETLHRLPMHNRKDMMVNGGVLMAHLNAKSGPWLKDLLRQIEIAIVTGKVSNEETEILKWVDNHVKI.

The ATP site is built by Gly-28 and Arg-31. Residues Gly-28 and Arg-31 each contribute to the CTP site. Mg(2+)-binding residues include Asp-41 and Asp-43. Arg-112, Asp-155, Arg-158, Arg-161, and Arg-164 together coordinate ATP. Positions 112, 155, 158, 161, and 164 each coordinate CTP.

The protein belongs to the tRNA nucleotidyltransferase/poly(A) polymerase family. Bacterial CCA-adding enzyme type 3 subfamily. As to quaternary structure, homodimer. The cofactor is Mg(2+).

It carries out the reaction a tRNA precursor + 2 CTP + ATP = a tRNA with a 3' CCA end + 3 diphosphate. It catalyses the reaction a tRNA with a 3' CCA end + 2 CTP + ATP = a tRNA with a 3' CCACCA end + 3 diphosphate. Catalyzes the addition and repair of the essential 3'-terminal CCA sequence in tRNAs without using a nucleic acid template. Adds these three nucleotides in the order of C, C, and A to the tRNA nucleotide-73, using CTP and ATP as substrates and producing inorganic pyrophosphate. tRNA 3'-terminal CCA addition is required both for tRNA processing and repair. Also involved in tRNA surveillance by mediating tandem CCA addition to generate a CCACCA at the 3' terminus of unstable tRNAs. While stable tRNAs receive only 3'-terminal CCA, unstable tRNAs are marked with CCACCA and rapidly degraded. This is CCA-adding enzyme from Staphylococcus aureus (strain MRSA252).